The chain runs to 248 residues: Probable transcriptional regulatory protein Oant_1200 (248 aa).

Belongs to the TACO1 family.

It is found in the cytoplasm. The chain is Probable transcriptional regulatory protein Oant_1200 from Brucella anthropi (strain ATCC 49188 / DSM 6882 / CCUG 24695 / JCM 21032 / LMG 3331 / NBRC 15819 / NCTC 12168 / Alc 37) (Ochrobactrum anthropi).